We begin with the raw amino-acid sequence, 60 residues long: Metallothionein A (60 aa).

The tract at residues Met1 to Cys28 is beta. Positions 4, 6, 12, 14, 18, 20, 23, 25, 28, 32, 33, 35, 36, 40, 43, 47, 49, 54, 58, and 59 each coordinate a divalent metal cation. The tract at residues Lys29 to Gln60 is alpha.

It belongs to the metallothionein superfamily. Type 1 family.

Metallothioneins have a high content of cysteine residues that bind various heavy metals. The protein is Metallothionein A (mta) of Trematomus bernacchii (Emerald rockcod).